The primary structure comprises 412 residues: Peptidase T (412 aa).

H84 contributes to the Zn(2+) binding site. D86 is an active-site residue. Residue D146 coordinates Zn(2+). The Proton acceptor role is filled by E179. The Zn(2+) site is built by E180, D202, and H385.

This sequence belongs to the peptidase M20B family. The cofactor is Zn(2+).

It localises to the cytoplasm. It catalyses the reaction Release of the N-terminal residue from a tripeptide.. Its function is as follows. Cleaves the N-terminal amino acid of tripeptides. This is Peptidase T from Haemophilus influenzae (strain 86-028NP).